A 118-amino-acid polypeptide reads, in one-letter code: Cytochrome b-c1 complex subunit 7 (118 aa).

The interval 1–32 (MVHLTKTLRFINNPGFRKFYYGLQGYNKYGLY) is igE-binding. Immunodominant epitope; induces specific IgE antibody production in mice. Causes degranulation of rat basophilic leukemia (RBL) cells and the release of beta-hexosaminidase from them.

Belongs to the UQCRB/QCR7 family. Component of the ubiquinol-cytochrome c oxidoreductase (cytochrome b-c1 complex, complex III, CIII), a multisubunit enzyme composed of 3 respiratory subunits cytochrome b, cytochrome c1 and Rieske protein, 2 core protein subunits, and additional low-molecular weight protein subunits. The complex exists as an obligatory dimer and forms supercomplexes (SCs) in the inner mitochondrial membrane with cytochrome c oxidase (complex IV, CIV).

It localises to the mitochondrion inner membrane. Functionally, component of the ubiquinol-cytochrome c oxidoreductase, a multisubunit transmembrane complex that is part of the mitochondrial electron transport chain which drives oxidative phosphorylation. The respiratory chain contains 3 multisubunit complexes succinate dehydrogenase (complex II, CII), ubiquinol-cytochrome c oxidoreductase (cytochrome b-c1 complex, complex III, CIII) and cytochrome c oxidase (complex IV, CIV), that cooperate to transfer electrons derived from NADH and succinate to molecular oxygen, creating an electrochemical gradient over the inner membrane that drives transmembrane transport and the ATP synthase. The cytochrome b-c1 complex catalyzes electron transfer from ubiquinol to cytochrome c, linking this redox reaction to translocation of protons across the mitochondrial inner membrane, with protons being carried across the membrane as hydrogens on the quinol. In the process called Q cycle, 2 protons are consumed from the matrix, 4 protons are released into the intermembrane space and 2 electrons are passed to cytochrome c. The protein is Cytochrome b-c1 complex subunit 7 of Dermatophagoides farinae (American house dust mite).